A 315-amino-acid polypeptide reads, in one-letter code: Probable mannose-6-phosphate isomerase GmuF (315 aa).

Zn(2+) contacts are provided by Q95, H97, E115, and H172. R192 is an active-site residue.

The protein belongs to the mannose-6-phosphate isomerase type 1 family. The cofactor is Zn(2+).

The catalysed reaction is D-mannose 6-phosphate = D-fructose 6-phosphate. In terms of biological role, seems to be involved in the degradation of glucomannan. This Bacillus subtilis (strain 168) protein is Probable mannose-6-phosphate isomerase GmuF (gmuF).